Reading from the N-terminus, the 155-residue chain is Small ribosomal subunit protein uS9 (155 aa).

Belongs to the universal ribosomal protein uS9 family.

This Rhizobium leguminosarum bv. trifolii (strain WSM2304) protein is Small ribosomal subunit protein uS9.